We begin with the raw amino-acid sequence, 291 residues long: Malolactic fermentation system transcriptional activator (291 aa).

Residues methionine 1 to aspartate 60 enclose the HTH lysR-type domain. Residues phenylalanine 20 to lysine 39 constitute a DNA-binding region (H-T-H motif).

Belongs to the LysR transcriptional regulatory family.

The protein resides in the cytoplasm. Functionally, required for malolactic fermentation. It is most probably a transcriptional activator. The protein is Malolactic fermentation system transcriptional activator (mleR) of Lactococcus lactis subsp. lactis (strain IL1403) (Streptococcus lactis).